Reading from the N-terminus, the 268-residue chain is MLESKLENLRQFFGELDRALIAYSGGVDSTLVAKVAYDVLGQNAVAITAVSPSLLPEELEDAQAQAQWIGIAHELVQTNEMANPNYTANPENRCYFCKSELHDTLQPLALALGYNYVIDGVNGDDLRDYRPGIQAAKERGGRSPLAELQISKLEVRQISQLLGLPWWDKPAQPCLSSRFPYGEEITVEKLQRVGRAEIYLRRLGYNQVRVRSEQNLARIELPPEQIQQFVQDVSLGELVQTFQNFGFLYVTLDLEGYQSGKLNRVLTK.

This sequence belongs to the LarE family.

This is an uncharacterized protein from Synechocystis sp. (strain ATCC 27184 / PCC 6803 / Kazusa).